The following is a 121-amino-acid chain: Large ribosomal subunit protein uL14c (121 aa).

It belongs to the universal ribosomal protein uL14 family. Part of the 50S ribosomal subunit.

Its subcellular location is the plastid. The protein resides in the chloroplast. Functionally, binds to 23S rRNA. This chain is Large ribosomal subunit protein uL14c, found in Emiliania huxleyi (Coccolithophore).